The primary structure comprises 234 residues: ATP synthase subunit a 1 (234 aa).

The next 6 helical transmembrane spans lie at 29-49 (FLVH…VALL), 90-110 (LIAT…IPGF), 116-136 (NLNT…VVGV), 147-167 (FVGP…IGHL), 186-206 (IVLV…MMLM), and 207-227 (GILV…IYIA).

The protein belongs to the ATPase A chain family. In terms of assembly, F-type ATPases have 2 components, CF(1) - the catalytic core - and CF(0) - the membrane proton channel. CF(1) has five subunits: alpha(3), beta(3), gamma(1), delta(1), epsilon(1). CF(0) has three main subunits: a(1), b(2) and c(9-12). The alpha and beta chains form an alternating ring which encloses part of the gamma chain. CF(1) is attached to CF(0) by a central stalk formed by the gamma and epsilon chains, while a peripheral stalk is formed by the delta and b chains.

The protein localises to the cell inner membrane. Its function is as follows. Key component of the proton channel; it plays a direct role in the translocation of protons across the membrane. The chain is ATP synthase subunit a 1 from Syntrophotalea carbinolica (strain DSM 2380 / NBRC 103641 / GraBd1) (Pelobacter carbinolicus).